The following is a 396-amino-acid chain: Probable sugar efflux transporter (396 aa).

The Cytoplasmic segment spans residues 1 to 14 (MTTNTVSRKVAWLR). Residues 15-35 (VVTLAVAAFIFNTTEFVPVGL) traverse the membrane as a helical segment. Residues 36 to 49 (LSDIAQSFHMQTAQ) are Periplasmic-facing. The helical transmembrane segment at 50-70 (VGIMLTIYAWVVALMSLPFML) threads the bilayer. At 71–80 (MTSQVERRKL) the chain is on the cytoplasmic side. Residues 81–101 (LICLFVVFIASHVLSFLSWSF) traverse the membrane as a helical segment. Position 102 (Thr102) is a topological domain, periplasmic. The chain crosses the membrane as a helical span at residues 103 to 123 (VLVISRIGVAFAHAIFWSITA). Residues 124–135 (SLAIRMAPAGKR) are Cytoplasmic-facing. A helical transmembrane segment spans residues 136–156 (AQALSLIATGTALAMVLGLPL). Topologically, residues 157–169 (GRIVGQYFGWRMT) are periplasmic. Residues 170–190 (FFAIGIGALVTLLCLIKLLPL) form a helical membrane-spanning segment. Over 191 to 208 (LPSEHSGSLKSLPLLFRR) the chain is Cytoplasmic. The helical transmembrane segment at 209–229 (PALMSIYLLTVVVVTAHYTAY) threads the bilayer. The Periplasmic portion of the chain corresponds to 230 to 245 (SYIEPFVQNIAGFSAN). The chain crosses the membrane as a helical span at residues 246-266 (FATALLLLLGGAGIIGSVIFG). Residues 267–274 (KLGNQYAS) lie on the Cytoplasmic side of the membrane. The chain crosses the membrane as a helical span at residues 275-295 (ALVSTAIALLLVCLALLLPAA). Residues 296 to 298 (NSE) lie on the Periplasmic side of the membrane. Residues 299–319 (IHLGVLSIFWGIAMMIIGLGM) form a helical membrane-spanning segment. Topologically, residues 320 to 332 (QVKVLALAPDATD) are cytoplasmic. The chain crosses the membrane as a helical span at residues 333-353 (VAMALFSGIFNIGIGAGALVG). Residues 354–363 (NQVSLHWSMS) lie on the Periplasmic side of the membrane. A helical transmembrane segment spans residues 364–384 (MIGYVGAVPAFAALIWSIIIF). Residues 385–396 (RRWPVTLEEQTQ) lie on the Cytoplasmic side of the membrane.

This sequence belongs to the major facilitator superfamily. SotB (TC 2.A.1.2) family.

Its subcellular location is the cell inner membrane. In terms of biological role, involved in the efflux of sugars. The physiological role may be the reduction of the intracellular concentration of toxic sugars or sugar metabolites. The sequence is that of Probable sugar efflux transporter from Shigella flexneri.